A 678-amino-acid chain; its full sequence is Probable metal-nicotianamine transporter YSL6 (678 aa).

A run of 14 helical transmembrane segments spans residues Val41 to His61, Leu65 to Val85, Cys113 to Met133, Leu158 to Ala178, Ile226 to Phe246, Ile279 to Ile299, Val324 to Tyr344, Leu394 to Phe414, Trp419 to Gly439, Gly467 to Ala487, Ile512 to Phe532, Ser561 to Ile581, Phe606 to Trp626, and Ile641 to Ile661.

Belongs to the YSL (TC 2.A.67.2) family. In terms of tissue distribution, expressed in roots and leaves.

The protein localises to the membrane. Functionally, may be involved in the transport of nicotianamine-chelated metals. The sequence is that of Probable metal-nicotianamine transporter YSL6 (YSL6) from Oryza sativa subsp. japonica (Rice).